The sequence spans 853 residues: Neural cell adhesion molecule 1 (853 aa).

The signal sequence occupies residues 1–19 (MLQTKNLIWTLFFLGTAVS). 5 Ig-like C2-type domains span residues 20–111 (LQVD…ATVN), 116–205 (QKLM…KDIQ), 212–300 (PTVQ…ASIH), 307–412 (PKIT…LEVQ), and 415–500 (PKLQ…ESLE). The Extracellular segment spans residues 20 to 719 (LQVDIVPSQG…NGSPTSGLST (700 aa)). Cystine bridges form between Cys41-Cys96 and Cys139-Cys189. Heparin contacts are provided by residues 152–156 (KHKGR) and 161–165 (KKDVR). N-linked (GlcNAc...) asparagine glycosylation is present at Asn222. A disulfide bridge links Cys235 with Cys286. N-linked (GlcNAc...) asparagine glycans are attached at residues Asn314, Asn346, Asn432, Asn458, and Asn487. Cys328 and Cys394 form a disulfide bridge. A disulfide bond links Cys435 and Cys488. Fibronectin type-III domains lie at 508 to 607 (TPSS…TQPV) and 609 to 704 (EPSA…SAQP). The chain crosses the membrane as a helical span at residues 720–737 (GAIVGILVVTFVLLLVAV). Residues 738–853 (DVTCYFLNKC…TQIKVNESKA (116 aa)) are Cytoplasmic-facing. The interval 764–853 (GAKGKDMEEG…TQIKVNESKA (90 aa)) is disordered. 2 stretches are compositionally biased toward basic and acidic residues: residues 766 to 807 (KGKD…HTEP) and 815 to 829 (EPEKGPVEAKPETET). Phosphoserine is present on residues Ser778 and Ser782. Residues 838–853 (TVPNDATQIKVNESKA) show a composition bias toward polar residues.

In terms of assembly, interacts with MDK. Found in a complex with SLC39A6, SLC39A10 and with NCAM1; this complex controls NCAM1 phosphorylation and integration into focal adhesion complexes during epithelial-tomesenchymal transition. Interacts with synaptic plasticity regulator PANTS. In terms of processing, polysialylated by ST8SIA2 and ST8SIA4. Polysialylation modulates cell interactions by confering both attractive and repulsive properties that are highly regulated by ST8SIA2 and ST8SIA4. Polysialylation is formed on a-2,3-linked sialic acid of core glycans.

It localises to the cell membrane. Its function is as follows. This protein is a cell adhesion molecule involved in neuron-neuron adhesion, neurite fasciculation, outgrowth of neurites, etc. This Bos taurus (Bovine) protein is Neural cell adhesion molecule 1.